The primary structure comprises 1128 residues: Nck-associated protein 1 (1128 aa).

Serine 2 is subject to N-acetylserine. The disordered stretch occupies residues 640–665 (AVNKKSKKQTGKKGEPEREKPGVESM). Residues 651–665 (KKGEPEREKPGVESM) are compositionally biased toward basic and acidic residues. The helical transmembrane segment at 995-1015 (IACLLMVFVAVSLPTLASNVM) threads the bilayer.

This sequence belongs to the HEM-1/HEM-2 family. In terms of assembly, component of the WAVE1 complex composed of ABI2, CYFIP1 or CYFIP2, BRK1, NCKAP1 and WASF1/WAVE1. Within the complex, a heterodimer containing NCKAP1 and CYFIP1 interacts with a heterotrimer formed by WAVE1, ABI2 and BRK1. Component of the WAVE2 complex composed of ABI1, CYFIP1/SRA1, NCKAP1/NAP1 and WASF2/WAVE2. CYFIP2 binds to activated RAC1 which causes the complex to dissociate, releasing activated WASF1. The complex can also be activated by NCK1. Associates preferentially with the first SH3 domain of NCK. Interacts with NYAP1, NYAP2 and MYO16. Interacts with TMEM132D. As to expression, preferentially expressed in brain, heart, liver and testis.

Its subcellular location is the cell membrane. It is found in the cell projection. It localises to the lamellipodium membrane. Functionally, part of the WAVE complex that regulates lamellipodia formation. The WAVE complex regulates actin filament reorganization via its interaction with the Arp2/3 complex. Actin remodeling activity is regulated by RAC1. As component of the WAVE1 complex, required for BDNF-NTRK2 endocytic trafficking and signaling from early endosomes. This chain is Nck-associated protein 1 (Nckap1), found in Rattus norvegicus (Rat).